A 312-amino-acid chain; its full sequence is Ribonuclease H2 subunit B (312 aa).

Ala-2 carries the N-acetylalanine modification. Residues 236–256 (EPSASLPNPPSKKIKLSDEPV) form a disordered region. Lys-295 is modified (N6-acetyllysine). Ser-296 is subject to Phosphoserine.

The protein belongs to the RNase H2 subunit B family. In terms of assembly, the RNase H2 complex is a heterotrimer composed of the catalytic subunit RNASEH2A and the non-catalytic subunits RNASEH2B and RNASEH2C. Widely expressed.

The protein localises to the nucleus. Functionally, non catalytic subunit of RNase H2, an endonuclease that specifically degrades the RNA of RNA:DNA hybrids. Participates in DNA replication, possibly by mediating the removal of lagging-strand Okazaki fragment RNA primers during DNA replication. Mediates the excision of single ribonucleotides from DNA:RNA duplexes. This chain is Ribonuclease H2 subunit B (RNASEH2B), found in Homo sapiens (Human).